A 269-amino-acid chain; its full sequence is Putative esterase/lipase 1 (269 aa).

The active site involves histidine 27. Catalysis depends on serine 94, which acts as the Charge relay system.

The protein belongs to the lipase/esterase LIP3/BchO family.

The polypeptide is Putative esterase/lipase 1 (Mycoplasma pneumoniae (strain ATCC 29342 / M129 / Subtype 1) (Mycoplasmoides pneumoniae)).